We begin with the raw amino-acid sequence, 425 residues long: D-tagatose 6-phosphate 4-epimerase (425 aa).

This sequence belongs to the GatZ/KbaZ family.

It catalyses the reaction keto-D-tagatose 6-phosphate = keto-D-fructose 6-phosphate. Its pathway is carbohydrate metabolism. Involved in galactitol and D-altritol catabolism. Catalyzes the epimerization of D-tagatose 6-phosphate to D-fructose 6-phosphate. The sequence is that of D-tagatose 6-phosphate 4-epimerase from Agrobacterium fabrum (strain C58 / ATCC 33970) (Agrobacterium tumefaciens (strain C58)).